The chain runs to 92 residues: Alpha-conotoxin-like Rt20.2 (92 aa).

Residues 1–24 (MPKLEMMLLVLLILPLSYFSAAGG) form the signal peptide. Positions 25–45 (QVVQGDLHSDVLARYLQRGDR) are excised as a propeptide. Glu-49 bears the 4-carboxyglutamate mark. Position 55 is a 4-hydroxyproline (Pro-55). 4 disulfides stabilise this stretch: Cys-63–Cys-72, Cys-68–Cys-80, Cys-73–Cys-90, and Cys-78–Cys-92.

This sequence belongs to the conotoxin D superfamily. As to quaternary structure, hetero-, homo- or pseudo-homodimer (identical sequence, different post-translational modifications). In terms of tissue distribution, expressed by the venom duct.

It is found in the secreted. Functionally, alpha-conotoxins act on postsynaptic membranes, they bind to the nicotinic acetylcholine receptors (nAChR) and thus inhibit them. Through its two C-terminal domains, this homodimeric protein would bind to two nAChR allosteric sites, located outside the nAChR C-loop of the principal binding face and at the adjacent binding interface in a clockwise direction. This toxin specifically blocks mammalian neuronal nAChR of the alpha-7/CHRNA7, alpha-3-beta-2/CHRNA3-CHRNB2 and alpha-4-beta-2/CHRNA4-CHRNB2 subtypes. This chain is Alpha-conotoxin-like Rt20.2, found in Conus rattus (Rat cone).